Here is a 105-residue protein sequence, read N- to C-terminus: uncharacterized protein (105 aa).

This is an uncharacterized protein from Mycobacterium bovis (strain ATCC BAA-935 / AF2122/97).